The following is a 452-amino-acid chain: Lamina-associated polypeptide 2, isoforms beta/delta/epsilon/gamma (452 aa).

The interval 1–409 (MPEFLEDPSV…KSEKTKKRRS (409 aa)) is nucleoplasmic. An LEM-like domain is found at 5 to 48 (LEDPSVLTKDKLKSELVANNVTLPAGEQRKDVYVQLYLQHLTAR). Disordered stretches follow at residues 48–111 (RNRP…DLDV) and 149–263 (REQG…RVET). A linker region spans residues 49-108 (NRPPLAAGANSKGPPDFSSDEEREPTPVLGSGASVGRGRGAVGRKATKKTDKPRLEDKDD). Phosphoserine is present on residues serine 59, serine 66, and serine 67. Phosphothreonine is present on threonine 74. Residues serine 79 and serine 82 each carry the phosphoserine modification. Residues arginine 85 and arginine 87 each carry the omega-N-methylarginine modification. The span at 96-105 (KKTDKPRLED) shows a compositional bias: basic and acidic residues. Residues 109-153 (LDVTELSNEELLDQLVRYGVNPGPIVGTTRKLYEKKLLKLREQGT) enclose the LEM domain. The NAKAP95-binding N stretch occupies residues 137–242 (TRKLYEKKLL…TSGSSTGGPL (106 aa)). At threonine 153 the chain carries Phosphothreonine. Positions 154–177 (ESRSSTPLPTVSSSAENTRQNGSN) are enriched in polar residues. Phosphoserine is present on residues serine 155 and serine 158. Threonine 159 and threonine 163 each carry phosphothreonine. Phosphoserine occurs at positions 165, 167, and 176. Residues 178 to 202 (DSDRYSDNDEDSKIELKLEKREPLK) show a composition bias toward basic and acidic residues. Phosphoserine; by PKC is present on serine 179. Residues serine 183 and serine 189 each carry the phosphoserine modification. Lysine 206 is modified (N6-acetyllysine). Threonine 210 is modified (phosphothreonine). 2 positions are modified to phosphoserine: serine 221 and serine 223. Low complexity predominate over residues 226-240 (GVTETEWTSGSSTGG). 6 positions are modified to phosphoserine: serine 249, serine 253, serine 264, serine 291, serine 305, and serine 306. Positions 298–370 (TGNFKHASSI…SCRRPIKGAA (73 aa)) are binds lamins B. Residues 299–373 (GNFKHASSIL…RPIKGAAGRP (75 aa)) are NAKAP95-binding C. Residue threonine 311 is modified to Phosphothreonine. Serine 314 carries the post-translational modification Phosphoserine. Arginine 319 is modified (citrulline). 3 positions are modified to phosphoserine: serine 361, serine 377, and serine 384. Lysine 388 is modified (N6-acetyllysine). Lysine 400 is covalently cross-linked (Glycyl lysine isopeptide (Lys-Gly) (interchain with G-Cter in SUMO2)). Serine 401 carries the post-translational modification Phosphoserine. The helical; Signal-anchor for type II membrane protein transmembrane segment at 410–430 (VPMWIKMLLFALVAVFLFLVY) threads the bilayer. Residues 431–452 (QAMETNQGNPFTNFLQDTKISN) are Lumenal-facing.

It belongs to the LEM family. In terms of assembly, interacts with LMNB1, LMNB2, BANF1, AKAP8L, GMCL and chromosomes. Mitosis-specific phosphorylation specifically abolishes its binding to lamin B and chromosomes. In terms of processing, citrullinated by PADI4.

It is found in the nucleus inner membrane. The protein resides in the chromosome. Functionally, may help direct the assembly of the nuclear lamina and thereby help maintain the structural organization of the nuclear envelope. Possible receptor for attachment of lamin filaments to the inner nuclear membrane. May be involved in the control of initiation of DNA replication through its interaction with NAKAP95. This Mus musculus (Mouse) protein is Lamina-associated polypeptide 2, isoforms beta/delta/epsilon/gamma (Tmpo).